We begin with the raw amino-acid sequence, 505 residues long: Cytochrome P450 9b2 (505 aa).

Cys449 provides a ligand contact to heme.

The protein belongs to the cytochrome P450 family. Heme serves as cofactor.

The protein localises to the endoplasmic reticulum membrane. The protein resides in the microsome membrane. In terms of biological role, may be involved in the metabolism of insect hormones and in the breakdown of synthetic insecticides. The polypeptide is Cytochrome P450 9b2 (Cyp9b2) (Drosophila melanogaster (Fruit fly)).